The chain runs to 692 residues: Elongation factor G (692 aa).

The tr-type G domain occupies 8–282 (ENTRNIGIMA…AVLDYLPSPL (275 aa)). GTP-binding positions include 17-24 (AHIDAGKT), 81-85 (DTPGH), and 135-138 (NKMD).

This sequence belongs to the TRAFAC class translation factor GTPase superfamily. Classic translation factor GTPase family. EF-G/EF-2 subfamily.

It localises to the cytoplasm. In terms of biological role, catalyzes the GTP-dependent ribosomal translocation step during translation elongation. During this step, the ribosome changes from the pre-translocational (PRE) to the post-translocational (POST) state as the newly formed A-site-bound peptidyl-tRNA and P-site-bound deacylated tRNA move to the P and E sites, respectively. Catalyzes the coordinated movement of the two tRNA molecules, the mRNA and conformational changes in the ribosome. The protein is Elongation factor G (fusA) of Halalkalibacterium halodurans (strain ATCC BAA-125 / DSM 18197 / FERM 7344 / JCM 9153 / C-125) (Bacillus halodurans).